We begin with the raw amino-acid sequence, 777 residues long: Histone-lysine N-methyltransferase set9 (777 aa).

In terms of domain architecture, SET spans 117–231 (CPFEVNATNR…VGEEITVTYS (115 aa)). Disordered stretches follow at residues 263–414 (AVQK…ILSP) and 682–718 (RMGS…QGQY). Positions 291-301 (TALQASRTPSV) are enriched in polar residues. The span at 323–337 (TSTTDSAAQGAGADG) shows a compositional bias: low complexity. 2 stretches are compositionally biased toward polar residues: residues 371-405 (TAPS…QGSE) and 688-698 (KQGSSAPSTKG).

This sequence belongs to the class V-like SAM-binding methyltransferase superfamily. Histone-lysine methyltransferase family. Suvar4-20 subfamily.

The protein resides in the nucleus. It is found in the chromosome. It catalyses the reaction L-lysyl(20)-[histone H4] + 3 S-adenosyl-L-methionine = N(6),N(6),N(6)-trimethyl-L-lysyl(20)-[histone H4] + 3 S-adenosyl-L-homocysteine + 3 H(+). Histone methyltransferase that trimethylates 'Lys-20' of histone H4 to form H4K20me3. The sequence is that of Histone-lysine N-methyltransferase set9 (hlm-1) from Neurospora crassa (strain ATCC 24698 / 74-OR23-1A / CBS 708.71 / DSM 1257 / FGSC 987).